The sequence spans 298 residues: MSSPDNSSPSLRIPPWLRVKLPCSHTFADTRALVEGLGLNTVCNSAKCPNMFECFSSGTATFLILGNVCTRNCAFCNITPGHVSPPDPDEPRRVAEAAARLALRHVVVTSVTRDDLDDGGAAHFAATITRLRAALPAATVEVLIPDFRGDHAALRTVMAAAPHIVNHNVETPPAHYARIRPQADYRQSLELLRRVKAAGGVAKSGLMVGLGENDTEVEGVLADLADCGCDIVTVGQYMRPSRQHPPVERYVHPDTFESFAACGRGMGIPFVFSAPLVRSSYNAESAYNALCTLRRKPA.

Residues Cys43, Cys48, Cys54, Cys69, Cys73, Cys76, and Ser280 each coordinate [4Fe-4S] cluster. Residues 55 to 269 (FSSGTATFLI…AACGRGMGIP (215 aa)) form the Radical SAM core domain.

This sequence belongs to the radical SAM superfamily. Lipoyl synthase family. Requires [4Fe-4S] cluster as cofactor.

It localises to the cytoplasm. The catalysed reaction is [[Fe-S] cluster scaffold protein carrying a second [4Fe-4S](2+) cluster] + N(6)-octanoyl-L-lysyl-[protein] + 2 oxidized [2Fe-2S]-[ferredoxin] + 2 S-adenosyl-L-methionine + 4 H(+) = [[Fe-S] cluster scaffold protein] + N(6)-[(R)-dihydrolipoyl]-L-lysyl-[protein] + 4 Fe(3+) + 2 hydrogen sulfide + 2 5'-deoxyadenosine + 2 L-methionine + 2 reduced [2Fe-2S]-[ferredoxin]. It participates in protein modification; protein lipoylation via endogenous pathway; protein N(6)-(lipoyl)lysine from octanoyl-[acyl-carrier-protein]: step 2/2. Catalyzes the radical-mediated insertion of two sulfur atoms into the C-6 and C-8 positions of the octanoyl moiety bound to the lipoyl domains of lipoate-dependent enzymes, thereby converting the octanoylated domains into lipoylated derivatives. In Nitratidesulfovibrio vulgaris (strain DP4) (Desulfovibrio vulgaris), this protein is Lipoyl synthase.